A 49-amino-acid polypeptide reads, in one-letter code: Large ribosomal subunit protein bL33 (49 aa).

Belongs to the bacterial ribosomal protein bL33 family.

This Syntrophotalea carbinolica (strain DSM 2380 / NBRC 103641 / GraBd1) (Pelobacter carbinolicus) protein is Large ribosomal subunit protein bL33.